A 169-amino-acid polypeptide reads, in one-letter code: Small ribosomal subunit protein uS9 (169 aa).

2 disordered regions span residues 1–29 and 128–169; these read MVEPTGIEDVQEYDENSEEYPAEYTTETP and MDPE…YSKR. Acidic residues predominate over residues 9–21; it reads DVQEYDENSEEYP. The span at 150–169 shows a compositional bias: basic residues; that stretch reads VERKKAGLKKARKAPQYSKR.

Belongs to the universal ribosomal protein uS9 family.

This chain is Small ribosomal subunit protein uS9, found in Thermobifida fusca (strain YX).